Here is a 223-residue protein sequence, read N- to C-terminus: Large ribosomal subunit protein uL3 (223 aa).

A disordered region spans residues 137–157; the sequence is GRASHGNSRSHNVPGSIGMAQ. Gln157 bears the N5-methylglutamine mark.

This sequence belongs to the universal ribosomal protein uL3 family. As to quaternary structure, part of the 50S ribosomal subunit. Forms a cluster with proteins L14 and L19. In terms of processing, methylated by PrmB.

One of the primary rRNA binding proteins, it binds directly near the 3'-end of the 23S rRNA, where it nucleates assembly of the 50S subunit. The sequence is that of Large ribosomal subunit protein uL3 from Burkholderia pseudomallei (strain 1106a).